A 341-amino-acid chain; its full sequence is tRNA N6-adenosine threonylcarbamoyltransferase (341 aa).

The Fe cation site is built by histidine 111 and histidine 115. Residues 133–137 (AVSGG), aspartate 166, glycine 179, aspartate 183, and asparagine 273 contribute to the substrate site. Aspartate 301 contributes to the Fe cation binding site.

It belongs to the KAE1 / TsaD family. The cofactor is Fe(2+).

It is found in the cytoplasm. It catalyses the reaction L-threonylcarbamoyladenylate + adenosine(37) in tRNA = N(6)-L-threonylcarbamoyladenosine(37) in tRNA + AMP + H(+). Its function is as follows. Required for the formation of a threonylcarbamoyl group on adenosine at position 37 (t(6)A37) in tRNAs that read codons beginning with adenine. Is involved in the transfer of the threonylcarbamoyl moiety of threonylcarbamoyl-AMP (TC-AMP) to the N6 group of A37, together with TsaE and TsaB. TsaD likely plays a direct catalytic role in this reaction. The polypeptide is tRNA N6-adenosine threonylcarbamoyltransferase (Geobacter metallireducens (strain ATCC 53774 / DSM 7210 / GS-15)).